Consider the following 323-residue polypeptide: Beta-ketoacyl-[acyl-carrier-protein] synthase III (323 aa).

Active-site residues include Cys113 and His250. Residues 251 to 255 (QANRR) are ACP-binding. Residue Asn280 is part of the active site.

It belongs to the thiolase-like superfamily. FabH family. Homodimer.

The protein localises to the cytoplasm. The enzyme catalyses malonyl-[ACP] + acetyl-CoA + H(+) = 3-oxobutanoyl-[ACP] + CO2 + CoA. Its pathway is lipid metabolism; fatty acid biosynthesis. Functionally, catalyzes the condensation reaction of fatty acid synthesis by the addition to an acyl acceptor of two carbons from malonyl-ACP. Catalyzes the first condensation reaction which initiates fatty acid synthesis and may therefore play a role in governing the total rate of fatty acid production. Possesses both acetoacetyl-ACP synthase and acetyl transacylase activities. Its substrate specificity determines the biosynthesis of branched-chain and/or straight-chain of fatty acids. The protein is Beta-ketoacyl-[acyl-carrier-protein] synthase III of Rhizobium meliloti (strain 1021) (Ensifer meliloti).